The following is a 243-amino-acid chain: DNA repair protein RecO (243 aa).

Belongs to the RecO family.

Its function is as follows. Involved in DNA repair and RecF pathway recombination. This chain is DNA repair protein RecO, found in Hyphomonas neptunium (strain ATCC 15444).